The sequence spans 227 residues: MKNILKVFNTTILALIIIIATFSNSANAADSGTLNYEVYKYNTNDTSIANDYFNKPAKYIKKNGKLYVQITVNHSHWITGMSIEGHKENIISKNTAKDERTSEFEVSKLNGKVDGKIDVYIDEKVNGKPFKYDHHYNITYKFNGPTDVAGANAPGKDDKNSASGSDKGSDGATTGQSESNSSNKDKVENPQTNAGTPAYIYAIPVASLALLIAITLFVRKKSKGNVE.

The first 28 residues, 1–28 (MKNILKVFNTTILALIIIIATFSNSANA), serve as a signal peptide directing secretion. The region spanning 29-150 (ADSGTLNYEV…KFNGPTDVAG (122 aa)) is the NEAT domain. Positions 47, 48, 132, and 136 each coordinate heme. The interval 149-191 (AGANAPGKDDKNSASGSDKGSDGATTGQSESNSSNKDKVENPQ) is disordered. Positions 161 to 172 (SASGSDKGSDGA) are enriched in low complexity. The segment covering 173–182 (TTGQSESNSS) has biased composition (polar residues). The short motif at 189–193 (NPQTN) is the NPQTN sorting signal element. Pentaglycyl murein peptidoglycan amidated threonine is present on Thr192. Residues 193-227 (NAGTPAYIYAIPVASLALLIAITLFVRKKSKGNVE) constitute a propeptide, removed by sortase B.

The protein belongs to the IsdC family. Monomer. Interacts with IsdA.

The protein resides in the secreted. It is found in the cell wall. Involved in heme (porphyrin) scavenging. Binds hemoglobin and almost exclusively free-base protoporphyrin IX. Probably has a role as the central conduit of the isd heme uptake system, i.e. mediates the transfer of the iron-containing nutrient from IsdABH to the membrane translocation system IsdDEF. Hemin-free IsdC (apo-IsdC) acquires hemin from hemin-containing IsdA (holo-IsdA) probably through the activated holo-IsdA-apo-IsdC complex and due to the higher affinity of apo-IsdC for the cofactor. The reaction is reversible. The chain is Iron-regulated surface determinant protein C (isdC) from Staphylococcus aureus (strain bovine RF122 / ET3-1).